We begin with the raw amino-acid sequence, 377 residues long: Spermidine/putrescine import ATP-binding protein PotA (377 aa).

Residues 18-248 (IRLSGISKSF…PKNLFVARFI (231 aa)) form the ABC transporter domain. An ATP-binding site is contributed by 50 to 57 (GPSGCGKT).

The protein belongs to the ABC transporter superfamily. Spermidine/putrescine importer (TC 3.A.1.11.1) family. As to quaternary structure, the complex is composed of two ATP-binding proteins (PotA), two transmembrane proteins (PotB and PotC) and a solute-binding protein (PotD).

Its subcellular location is the cell inner membrane. It catalyses the reaction ATP + H2O + polyamine-[polyamine-binding protein]Side 1 = ADP + phosphate + polyamineSide 2 + [polyamine-binding protein]Side 1.. Functionally, part of the ABC transporter complex PotABCD involved in spermidine/putrescine import. Responsible for energy coupling to the transport system. The protein is Spermidine/putrescine import ATP-binding protein PotA of Vibrio vulnificus (strain CMCP6).